The primary structure comprises 208 residues: Germin-like protein subfamily 3 member 1 (208 aa).

A signal peptide spans 1 to 18 (MLRTIFLLSLLFALSNAS). An intrachain disulfide couples cysteine 23 to cysteine 38. One can recognise a Cupin type-1 domain in the interval 52 to 198 (SGLGTPGNTT…TTFLDATTVK (147 aa)). N-linked (GlcNAc...) asparagine glycosylation occurs at asparagine 59. Residues histidine 100, histidine 102, glutamate 107, and histidine 146 each contribute to the Mn(2+) site.

Belongs to the germin family. In terms of assembly, may not form oligomer. Expressed during germination, and also in green shoots, etiolated seedlings and whole seedlings.

The protein localises to the secreted. Its subcellular location is the extracellular space. It is found in the apoplast. In terms of biological role, may play a role in plant defense. Probably has no oxalate oxidase activity even if the active site is conserved. The chain is Germin-like protein subfamily 3 member 1 (GLP1) from Arabidopsis thaliana (Mouse-ear cress).